Reading from the N-terminus, the 115-residue chain is Large ribosomal subunit protein bL20c (115 aa).

It belongs to the bacterial ribosomal protein bL20 family.

It localises to the plastid. It is found in the chloroplast. Functionally, binds directly to 23S ribosomal RNA and is necessary for the in vitro assembly process of the 50S ribosomal subunit. It is not involved in the protein synthesizing functions of that subunit. This is Large ribosomal subunit protein bL20c from Pyropia yezoensis (Susabi-nori).